A 388-amino-acid chain; its full sequence is MKFVDEAVIRVEAGDGGSGCVSFRREKYIPDGGPDGGDGGDGGSVYLQADENHNTLIEYRFERFHMAERGENGRGRDCTGHSGKDLILKVPVGTRAIDDETEEVLGDLTTHGQKLLVAKGGFHGLGNTRFKSSTNRAPRQKTLGTPGEVRSLKLELLLLADVGLLGMPNAGKSTFIRAVSRATPKVADYPFTTLVPNLGVVNPRPGQSFVIADIPGLIEGAAEGAGLGIRFLKHLERCRILLHIIDIEPIDGTDPVDSARAIVGELEKYSPKLASKPRWLVFNKADLLLEDELKEKVARVVKELGWEGDVYTISAYSRDGTKELATKLLDFIQSLPPEDKDANPDAEVEFKWDNYHQANIDAINEDYDDEFDDDFDDDDYDVEVIYQR.

An Obg domain is found at 1–159 (MKFVDEAVIR…RSLKLELLLL (159 aa)). The region spanning 160–333 (ADVGLLGMPN…LATKLLDFIQ (174 aa)) is the OBG-type G domain. GTP contacts are provided by residues 166-173 (GMPNAGKS), 191-195 (FTTLV), 213-216 (DIPG), 283-286 (NKAD), and 314-316 (SAY). The Mg(2+) site is built by serine 173 and threonine 193.

Belongs to the TRAFAC class OBG-HflX-like GTPase superfamily. OBG GTPase family. In terms of assembly, monomer. It depends on Mg(2+) as a cofactor.

The protein resides in the cytoplasm. In terms of biological role, an essential GTPase which binds GTP, GDP and possibly (p)ppGpp with moderate affinity, with high nucleotide exchange rates and a fairly low GTP hydrolysis rate. Plays a role in control of the cell cycle, stress response, ribosome biogenesis and in those bacteria that undergo differentiation, in morphogenesis control. The protein is GTPase Obg of Shewanella sp. (strain MR-4).